We begin with the raw amino-acid sequence, 272 residues long: Catechol O-methyltransferase (272 aa).

At 1 to 6 (MLEAPP) the chain is on the cytoplasmic side. The chain crosses the membrane as a helical; Signal-anchor for type II membrane protein span at residues 7–27 (LLLVAGGVGLALLALRWLATT). Over 28 to 272 (DLQFFGRAFI…YKGLSGPARP (245 aa)) the chain is Extracellular. Residues V93, E115, S123, E141, 168-171 (GASQ), S170, and D192 each bind S-adenosyl-L-methionine. Residue D192 coordinates Mg(2+). K195 is a substrate binding site. Mg(2+) contacts are provided by D220 and N221. Residues N221 and E250 each contribute to the substrate site. S267 is modified (phosphoserine).

Belongs to the class I-like SAM-binding methyltransferase superfamily. Cation-dependent O-methyltransferase family. Mg(2+) serves as cofactor.

Its subcellular location is the cytoplasm. The protein localises to the cell membrane. The catalysed reaction is a catechol + S-adenosyl-L-methionine = a guaiacol + S-adenosyl-L-homocysteine + H(+). The enzyme catalyses 2-hydroxyestrone + S-adenosyl-L-methionine = 2-hydroxy-3-methoxy-estrone + S-adenosyl-L-homocysteine + H(+). It carries out the reaction 4-hydroxyestrone + S-adenosyl-L-methionine = 4-methoxyestrone + S-adenosyl-L-homocysteine + H(+). It catalyses the reaction 2-hydroxyestrone + S-adenosyl-L-methionine = 2-methoxyestrone + S-adenosyl-L-homocysteine + H(+). The catalysed reaction is 4-hydroxy-17beta-estradiol + S-adenosyl-L-methionine = 4-methoxy-17beta-estradiol + S-adenosyl-L-homocysteine + H(+). The enzyme catalyses 2-hydroxy-17beta-estradiol + S-adenosyl-L-methionine = 2-hydroxy-3-methoxy-17beta-estradiol + S-adenosyl-L-homocysteine + H(+). It carries out the reaction 2-hydroxy-17beta-estradiol + S-adenosyl-L-methionine = 2-methoxy-17beta-estradiol + S-adenosyl-L-homocysteine + H(+). Its function is as follows. Catalyzes the O-methylation, and thereby the inactivation, of catecholamine neurotransmitters and catechol hormones. Also shortens the biological half-lives of certain neuroactive drugs, like L-DOPA, alpha-methyl DOPA and isoproterenol. In Bos taurus (Bovine), this protein is Catechol O-methyltransferase (COMT).